Consider the following 510-residue polypeptide: Membrane-bound transcription factor site-2 protease (510 aa).

Residues 1–3 (MIP) are Cytoplasmic-facing. The chain crosses the membrane as a helical span at residues 4 to 24 (VSLVVVVVGGWTAVYLADLVL). Over 25 to 74 (KSSVYFKHSYEDWLEKNGLSISPFHIRWQTSVFNRAFYSWGRRKARMLYQ) the chain is Lumenal. 2 helical membrane-spanning segments follow: residues 75-95 (WFNF…FLLG) and 96-107 (KTLMQTLAQMMA). The Lumenal portion of the chain corresponds to 108–135 (DSPSSSSSSSSSSSSSSSSSIHNEQVLQ). Residues 136–160 (VVVPGINLPVNQLTYFFAAVLISGV) form a helical membrane-spanning segment. His-162 is a binding site for Zn(2+). Glu-163 is a catalytic residue. Transmembrane regions (helical) follow at residues 165-177 (GHGI…QVRF), 178-200 (NGFG…TTHL), and 220-242 (FVLA…PFYY). His-166 is a binding site for Zn(2+). The Lumenal segment spans residues 243–437 (TGVGVLITEV…LPVIVETFVK (195 aa)). The N-linked (GlcNAc...) asparagine glycan is linked to Asn-328. 2 helical membrane-spanning segments follow: residues 438–455 (YLIS…VPCF) and 456–467 (ALDGQWILNSFL). Residues 468-483 (DATLTSVIGDNDVKDL) are Lumenal-facing. The chain crosses the membrane as a helical span at residues 484–504 (IGFFILLGGSVLLAANVTLGL). Residues 505 to 510 (WMVTAR) lie on the Cytoplasmic side of the membrane.

This sequence belongs to the peptidase M50A family. Zn(2+) is required as a cofactor.

Its subcellular location is the membrane. It is found in the cytoplasm. The protein localises to the golgi apparatus membrane. The enzyme catalyses Cleaves several transcription factors that are type-2 transmembrane proteins within membrane-spanning domains. Known substrates include sterol regulatory element-binding protein (SREBP) -1, SREBP-2 and forms of the transcriptional activator ATF6. SREBP-2 is cleaved at the site 477-DRSRILL-|-CVLTFLCLSFNPLTSLLQWGGA-505. The residues Asn-Pro, 11 residues distal to the site of cleavage in the membrane-spanning domain, are important for cleavage by S2P endopeptidase. Replacement of either of these residues does not prevent cleavage, but there is no cleavage if both of these residues are replaced.. Functionally, zinc metalloprotease that mediates intramembrane proteolysis of proteins such as ATF6, ATF6B, SREBF1/SREBP1 and SREBF2/SREBP2. Catalyzes the second step in the proteolytic activation of the sterol regulatory element-binding proteins (SREBPs) SREBF1/SREBP1 and SREBF2/SREBP2: cleaves SREBPs within the first transmembrane segment, thereby releasing the N-terminal segment with a portion of the transmembrane segment attached. Mature N-terminal SREBP fragments shuttle to the nucleus and activate gene transcription. Also mediates the second step in the proteolytic activation of the cyclic AMP-dependent transcription factor ATF-6 (ATF6 and ATF6B). Involved in intramembrane proteolysis during bone formation. In astrocytes and osteoblasts, upon DNA damage and ER stress, mediates the second step of the regulated intramembrane proteolytic activation of the transcription factor CREB3L1, leading to the inhibition of cell-cycle progression. This is Membrane-bound transcription factor site-2 protease (MBTPS2) from Cricetulus griseus (Chinese hamster).